A 138-amino-acid polypeptide reads, in one-letter code: uncharacterized protein (138 aa).

One can recognise a MsrB domain in the interval 9–133 (EDEWKKELGP…NSASLEFHNE (125 aa)). Cysteine 49, cysteine 52, cysteine 97, and cysteine 100 together coordinate Zn(2+). Cysteine 122 serves as the catalytic Nucleophile.

This sequence belongs to the MsrB Met sulfoxide reductase family. Requires Zn(2+) as cofactor.

The protein localises to the cytoplasm. Its subcellular location is the nucleus. This is an uncharacterized protein from Schizosaccharomyces pombe (strain 972 / ATCC 24843) (Fission yeast).